Here is a 151-residue protein sequence, read N- to C-terminus: Transcriptional repressor NrdR (151 aa).

A zinc finger lies at 3 to 34 (CPFCNSVDTSVKNSRPSDCKMSVRRRRSCDSC). Residues 49 to 139 (VKVLKKDGSV…VYMNFSDVND (91 aa)) form the ATP-cone domain.

Belongs to the NrdR family. Zn(2+) is required as a cofactor.

Negatively regulates transcription of bacterial ribonucleotide reductase nrd genes and operons by binding to NrdR-boxes. This is Transcriptional repressor NrdR from Anaplasma marginale (strain Florida).